We begin with the raw amino-acid sequence, 82 residues long: Large ribosomal subunit protein bL27 (82 aa).

The disordered stretch occupies residues 1-20 (MATKKAGGSSSNGRDSIGKR).

This sequence belongs to the bacterial ribosomal protein bL27 family.

In Neorickettsia sennetsu (strain ATCC VR-367 / Miyayama) (Ehrlichia sennetsu), this protein is Large ribosomal subunit protein bL27.